The chain runs to 516 residues: 3-phosphoshikimate 1-carboxyvinyltransferase, chloroplastic (516 aa).

The N-terminal 72 residues, 1–72, are a transit peptide targeting the chloroplast; the sequence is MAQINNMAQG…RISASVATAQ (72 aa). Positions 95, 96, and 100 each coordinate 3-phosphoshikimate. Lysine 95 lines the phosphoenolpyruvate pocket. Residues glycine 173 and arginine 203 each coordinate phosphoenolpyruvate. Serine 250, serine 251, glutamine 252, serine 278, aspartate 403, and lysine 430 together coordinate 3-phosphoshikimate. Glutamine 252 lines the phosphoenolpyruvate pocket. Aspartate 403 functions as the Proton acceptor in the catalytic mechanism. The phosphoenolpyruvate site is built by arginine 434, arginine 476, and lysine 501.

The protein belongs to the EPSP synthase family. As to expression, mostly expressed in flower petals, and, to a lower extent, in roots, stems and anthers, but barely in leaves.

It is found in the plastid. Its subcellular location is the chloroplast. It carries out the reaction 3-phosphoshikimate + phosphoenolpyruvate = 5-O-(1-carboxyvinyl)-3-phosphoshikimate + phosphate. The protein operates within metabolic intermediate biosynthesis; chorismate biosynthesis; chorismate from D-erythrose 4-phosphate and phosphoenolpyruvate: step 6/7. Competitively inhibited by glyphosate. Its function is as follows. Catalyzes the transfer of the enolpyruvyl moiety of phosphoenolpyruvate (PEP) to the 5-hydroxyl of shikimate-3-phosphate (S3P) to produce enolpyruvyl shikimate-3-phosphate and inorganic phosphate. Involved in the accumulation of volatile benzoides in flowers, scent attracting pollinators (e.g. the night-active hawkmoth pollinator Manduca sexta). The sequence is that of 3-phosphoshikimate 1-carboxyvinyltransferase, chloroplastic from Petunia hybrida (Petunia).